A 539-amino-acid chain; its full sequence is Serine/threonine-protein kinase 35 (539 aa).

The tract at residues 103–161 (ITIQGPAPPHLGARRRDEARGARAAPLLLPPPPAAMETGKENGARRGTKSPERKRRSPV) is disordered. Positions 148-160 (RGTKSPERKRRSP) are enriched in basic residues. In terms of domain architecture, Protein kinase spans 207–535 (YSLLAEIGRG…FELETRMDQV (329 aa)). Residues 213-221 (IGRGSYGVV) and Lys236 each bind ATP. Residue Asp365 is the Proton acceptor of the active site.

The protein belongs to the protein kinase superfamily. Ser/Thr protein kinase family. In terms of assembly, interacts with PDLIM1/CLP-36. Post-translationally, autophosphorylated.

The protein localises to the nucleus. The protein resides in the nucleolus. Its subcellular location is the cytoplasm. It carries out the reaction L-seryl-[protein] + ATP = O-phospho-L-seryl-[protein] + ADP + H(+). The enzyme catalyses L-threonyl-[protein] + ATP = O-phospho-L-threonyl-[protein] + ADP + H(+). The polypeptide is Serine/threonine-protein kinase 35 (Stk35) (Mus musculus (Mouse)).